Reading from the N-terminus, the 541-residue chain is Mesoderm induction early response protein 2 (541 aa).

S11 carries the post-translational modification Phosphoserine. Disordered regions lie at residues 100–119 and 131–186; these read DPIS…LPDM and LSGE…EEDA. Polar residues predominate over residues 140 to 165; it reads QSSADDLTPSVTSHEASDLFHNQSGS. One can recognise an ELM2 domain in the interval 194-291; sequence KEIMVGPQFQ…EALRRLRFNV (98 aa). Positions 296-348 constitute an SANT domain; the sequence is DGLCAWSEEECRNFEHGFRVHGKNFHLIQANKVRTRSVGECVEYYYLWKKSER. The interval 364-440 is disordered; that stretch reads VSSGTTDTEQ…EPPAVPSLQQ (77 aa).

Part of a complex containing at least CDYL, MIER1, MIER2, HDAC1 and HDAC2.

It is found in the nucleus. Its function is as follows. Transcriptional repressor. This is Mesoderm induction early response protein 2 (Mier2) from Mus musculus (Mouse).